Reading from the N-terminus, the 180-residue chain is Probable cobalt-precorrin-6B C(15)-methyltransferase (decarboxylating) (180 aa).

Residues Thr-16, 40–44, Asp-61, and Ala-89 contribute to the S-adenosyl-L-methionine site; that span reads GCGSG.

It belongs to the methyltransferase superfamily. Archaeal-type CbiT family.

It carries out the reaction Co-precorrin-6B + S-adenosyl-L-methionine = Co-precorrin-7 + S-adenosyl-L-homocysteine + CO2. Its pathway is cofactor biosynthesis; adenosylcobalamin biosynthesis; cob(II)yrinate a,c-diamide from sirohydrochlorin (anaerobic route): step 8/10. Catalyzes the methylation of C-15 in cobalt-precorrin-6B followed by the decarboxylation of C-12 to form cobalt-precorrin-7. In Methanococcus vannielii (strain ATCC 35089 / DSM 1224 / JCM 13029 / OCM 148 / SB), this protein is Probable cobalt-precorrin-6B C(15)-methyltransferase (decarboxylating).